We begin with the raw amino-acid sequence, 144 residues long: MKTFSAKGNEVKRDWFVVDASEKVLGRLATEIARRLRGKHKAEYTPHVDTGDYIIVTNAEKVVVTGRKFKNKMYHHHTGFPGGIKSASFEKLQDKNPTKIIELAVKGMLPKNPLGREMYRKLKVYAGSEHPHTAQQPKQLEIEE.

Belongs to the universal ribosomal protein uL13 family. Part of the 50S ribosomal subunit.

This protein is one of the early assembly proteins of the 50S ribosomal subunit, although it is not seen to bind rRNA by itself. It is important during the early stages of 50S assembly. The polypeptide is Large ribosomal subunit protein uL13 (Legionella pneumophila (strain Paris)).